We begin with the raw amino-acid sequence, 316 residues long: N-acetylmuramic acid 6-phosphate etherase (316 aa).

Positions 68–231 (ITDRLRSGGR…STCAMVRLGK (164 aa)) constitute an SIS domain. Catalysis depends on Glu-96, which acts as the Proton donor. Glu-127 is a catalytic residue.

The protein belongs to the GCKR-like family. MurNAc-6-P etherase subfamily. Homodimer.

The enzyme catalyses N-acetyl-D-muramate 6-phosphate + H2O = N-acetyl-D-glucosamine 6-phosphate + (R)-lactate. Its pathway is amino-sugar metabolism; N-acetylmuramate degradation. Specifically catalyzes the cleavage of the D-lactyl ether substituent of MurNAc 6-phosphate, producing GlcNAc 6-phosphate and D-lactate. The protein is N-acetylmuramic acid 6-phosphate etherase of Prochlorococcus marinus (strain MIT 9313).